A 306-amino-acid chain; its full sequence is Cytochrome P450 monooxygenase aclO (306 aa).

C237 is a heme binding site.

It belongs to the cytochrome P450 family. The cofactor is heme.

The protein operates within mycotoxin biosynthesis. Its function is as follows. Cytochrome P450 monooxygenase; part of the gene cluster that mediates the biosynthesis of aspirochlorine (or antibiotic A30641), an unusual halogenated spiro compound with distinctive antifungal properties due to selective inhibition of protein biosynthesis, and which is also active against bacteria, viruses, and murine tumor cells. The non-ribosomal peptide synthetase (NRPS) aclP is responsible the formation of the diketopiperazine (DKP) core from the condensation of 2 phenylalanine residues. One Phe residue is tailored into chlorotyrosine by hydroxylation and chlorination, whereas the second Phe undergoes an unprecedented C-C bond cleavage to be converted into glycine. After formation of the DKP, sulfur is incorporated into the DKP by conjugation with glutathione by aclG, followed by its stepwise degradation to the thiol by aclI, aclJ and aclK, and the dithiol oxidation by aclT. In addition, oxygenases (aclB, aclC, aclL and aclO) and O-methyltransferases (aclM and aclU) act as tailoring enzymes to produce the intermediate dechloroaspirochlorine. Ultimately, chlorination of dechloroaspirochlorine by the halogenase aclH is the last step in the aspirochlorine pathway. The polypeptide is Cytochrome P450 monooxygenase aclO (Aspergillus oryzae (strain ATCC 42149 / RIB 40) (Yellow koji mold)).